An 883-amino-acid chain; its full sequence is Probable valine--tRNA ligase, cytoplasmic (883 aa).

Residues 1–23 show a composition bias toward basic and acidic residues; it reads MTLKMDRKALKEEKKKQKLEKFL. The interval 1 to 49 is disordered; the sequence is MTLKMDRKALKEEKKKQKLEKFLNKKTTQSKISKAPKPAKNKSSSGYDP. Residues 30–45 are compositionally biased toward low complexity; that stretch reads SKISKAPKPAKNKSSS. The 'HIGH' region signature appears at 82 to 92; that stretch reads PNITGSLHIGH. The 'KMSKS' region signature appears at 586 to 590; sequence KMSKS. Position 589 (Lys589) interacts with ATP.

Belongs to the class-I aminoacyl-tRNA synthetase family.

Its subcellular location is the cytoplasm. It catalyses the reaction tRNA(Val) + L-valine + ATP = L-valyl-tRNA(Val) + AMP + diphosphate. This chain is Probable valine--tRNA ligase, cytoplasmic, found in Vairimorpha ceranae (strain BRL01) (Microsporidian parasite).